A 79-amino-acid chain; its full sequence is Conotoxin VnMKLT1-01121 (79 aa).

Positions 1–22 (MKLTCMMIVAVLFLTAWTFVTA) are cleaved as a signal peptide. A propeptide spanning residues 23-48 (DDSRNGLEYLFPKAHYEMNPEASKLN) is cleaved from the precursor. 3 cysteine pairs are disulfide-bonded: Cys53–Cys70, Cys60–Cys74, and Cys69–Cys78.

It belongs to the conotoxin O1 superfamily. As to expression, expressed by the venom duct.

It localises to the secreted. The protein is Conotoxin VnMKLT1-01121 of Conus ventricosus (Mediterranean cone).